A 298-amino-acid chain; its full sequence is Ethanolamine ammonia-lyase small subunit (298 aa).

Adenosylcob(III)alamin is bound by residues V210, E231, and C261.

Belongs to the EutC family. The basic unit is a heterodimer which dimerizes to form tetramers. The heterotetramers trimerize; 6 large subunits form a core ring with 6 small subunits projecting outwards. Adenosylcob(III)alamin is required as a cofactor.

Its subcellular location is the bacterial microcompartment. It carries out the reaction ethanolamine = acetaldehyde + NH4(+). Its pathway is amine and polyamine degradation; ethanolamine degradation. Functionally, catalyzes the deamination of various vicinal amino-alcohols to oxo compounds. Allows this organism to utilize ethanolamine as the sole source of nitrogen and carbon in the presence of external vitamin B12. This chain is Ethanolamine ammonia-lyase small subunit, found in Salmonella heidelberg (strain SL476).